The primary structure comprises 240 residues: Probable xyloglucan-specific endo-beta-1,4-glucanase A (240 aa).

Residues 1–15 (MKFLTPLVLSSLASA) form the signal peptide.

The protein belongs to the glycosyl hydrolase 12 (cellulase H) family.

Its subcellular location is the secreted. The enzyme catalyses xyloglucan + H2O = xyloglucan oligosaccharides.. Catalyzes endohydrolysis of 1,4-beta-D-glucosidic linkages in xyloglucan with retention of the beta-configuration of the glycosyl residues. Specific for xyloglucan and does not hydrolyze other cell wall components. This is Probable xyloglucan-specific endo-beta-1,4-glucanase A (xgeA) from Aspergillus oryzae (strain ATCC 42149 / RIB 40) (Yellow koji mold).